We begin with the raw amino-acid sequence, 376 residues long: 23S rRNA (uracil(747)-C(5))-methyltransferase RlmC (376 aa).

Residues C3, C11, C14, and C88 each contribute to the [4Fe-4S] cluster site. S-adenosyl-L-methionine contacts are provided by Q213, F242, E263, and N308. The active-site Nucleophile is C335.

This sequence belongs to the class I-like SAM-binding methyltransferase superfamily. RNA M5U methyltransferase family. RlmC subfamily.

The catalysed reaction is uridine(747) in 23S rRNA + S-adenosyl-L-methionine = 5-methyluridine(747) in 23S rRNA + S-adenosyl-L-homocysteine + H(+). Catalyzes the formation of 5-methyl-uridine at position 747 (m5U747) in 23S rRNA. In Vibrio vulnificus (strain CMCP6), this protein is 23S rRNA (uracil(747)-C(5))-methyltransferase RlmC.